Reading from the N-terminus, the 386-residue chain is Synaptotagmin-5 (386 aa).

Residues 1–16 (MFPEPPTLGSPAPKTP) show a composition bias toward pro residues. Positions 1-21 (MFPEPPTLGSPAPKTPPDSSR) are disordered. Over 1–24 (MFPEPPTLGSPAPKTPPDSSRIRQ) the chain is Vesicular. A helical transmembrane segment spans residues 25-45 (GAVPAWVLATIVLGSGLLVFS). Residues 46–386 (SCFCLYRKRC…PDRARPIPAP (341 aa)) are Cytoplasmic-facing. 2 consecutive C2 domains span residues 108–227 (QLGR…QAWR) and 239–372 (KLGD…AQWH). The Ca(2+) site is built by Leu-138, Asp-139, Asp-145, Asp-197, Phe-198, Asp-199, Ser-202, Asp-205, Asp-270, Asp-276, Asp-330, and Asp-332.

It belongs to the synaptotagmin family. In terms of assembly, homodimer. Interacts with both alpha- and beta-tubulin. Ca(2+) is required as a cofactor.

The protein resides in the cytoplasmic vesicle. It localises to the secretory vesicle. The protein localises to the synaptic vesicle membrane. It is found in the recycling endosome membrane. May be involved in Ca(2+)-dependent exocytosis of secretory vesicles through Ca(2+) and phospholipid binding to the C2 domain or may serve as Ca(2+) sensors in the process of vesicular trafficking and exocytosis. Regulates the Ca(2+)-dependent secretion of norepinephrine in PC12 cells. Required for export from the endocytic recycling compartment to the cell surface. This chain is Synaptotagmin-5 (Syt5), found in Mus musculus (Mouse).